Reading from the N-terminus, the 267-residue chain is Undecaprenyl-diphosphatase (267 aa).

Helical transmembrane passes span 39-59 (PGLA…IWYF), 87-107 (VLYL…LNDL), 112-132 (FRSP…LWAV), 145-165 (VTLR…VPGV), 183-203 (PSVA…AVIV), 216-236 (LPLL…ISVL), and 244-264 (SFGV…ATLA).

Belongs to the UppP family.

It localises to the cell inner membrane. The catalysed reaction is di-trans,octa-cis-undecaprenyl diphosphate + H2O = di-trans,octa-cis-undecaprenyl phosphate + phosphate + H(+). Catalyzes the dephosphorylation of undecaprenyl diphosphate (UPP). Confers resistance to bacitracin. The protein is Undecaprenyl-diphosphatase of Gemmatimonas aurantiaca (strain DSM 14586 / JCM 11422 / NBRC 100505 / T-27).